Reading from the N-terminus, the 490-residue chain is Cyclin-A2-1 (490 aa).

Positions Phe-34–Arg-76 are disordered. Positions Thr-63–Pro-72 are enriched in polar residues.

This sequence belongs to the cyclin family. Cyclin AB subfamily.

The protein is Cyclin-A2-1 (CYCA2-1) of Oryza sativa subsp. japonica (Rice).